Consider the following 394-residue polypeptide: Elongation factor Tu (394 aa).

The 195-residue stretch at K10–E204 folds into the tr-type G domain. Positions G19–T26 are G1. G19–T26 is a binding site for GTP. Position 26 (T26) interacts with Mg(2+). The tract at residues G60 to N64 is G2. The tract at residues D81–G84 is G3. Residues D81–H85 and N136–D139 contribute to the GTP site. Residues N136–D139 form a G4 region. A G5 region spans residues S174 to L176.

It belongs to the TRAFAC class translation factor GTPase superfamily. Classic translation factor GTPase family. EF-Tu/EF-1A subfamily. In terms of assembly, monomer.

It is found in the cytoplasm. The catalysed reaction is GTP + H2O = GDP + phosphate + H(+). In terms of biological role, GTP hydrolase that promotes the GTP-dependent binding of aminoacyl-tRNA to the A-site of ribosomes during protein biosynthesis. This Shewanella amazonensis (strain ATCC BAA-1098 / SB2B) protein is Elongation factor Tu.